The sequence spans 890 residues: MINSMPYLHKNLRLLRLLSSKSSPFPLSLRPFSPRSFSLSTLFSSSSSSSSMENNEATNGSKSSSNSFVFNKRRAEGFDITDKKKRNLERKSQKLNPTNTIAYAQILGTGMDTQDTSSSVLLFFDKQRFIFNAGEGLQRFCTEHKIKLSKIDHVFLSRVCSETAGGLPGLLLTLAGIGEEGLSVNVWGPSDLNYLVDAMKSFIPRAAMVHTRSFGPSSTPDPIVLVNDEVVKISAIILKPCHSEEDSGNKSGDLSVVYVCELPEILGKFDLEKAKKVFGVKPGPKYSRLQSGESVKSDERDITVHPSDVMGPSLPGPIVLLVDCPTESHAAELFSLKSLESYYSSPDEQTIGAKFVNCIIHLSPSSVTSSPTYQSWMKKFHLTQHILAGHQRKNMAFPILKASSRIAARLNYLCPQFFPAPGFWPSQLTDNSIIDPTPSNKCSSSNLAESISAENLLKFNLRPVAIRGIDRSCIPAPLTSSEVVDELLSEIPEIKDKSEEIKQFWNKQHNKTIIEKLWLSECNTVLPNCLEKIRRDDMEIVILGTGSSQPSKYRNVSAIFIDLFSRGSLLLDCGEGTLGQLKRRYGLDGADEAVRKLRCIWISHIHADHHTGLARILALRSKLLKGVTHEPVIVVGPRPLKRFLDAYQRLEDLDMEFLDCRSTTATSWASLESGGEAEGSLFTQGSPMQSVFKRSDISMDNSSVLLCLKNLKKVLSEIGLNDLISFPVVHCPQAYGVVIKAAERVNSVGEQILGWKMVYSGDSRPCPETVEASRDATILIHEATFEDALIEEALAKNHSTTKEAIDVGSAANVYRIVLTHFSQRYPKIPVIDESHMHNTCIAFDLMSINMADLHVLPKVLPYFKTLFRDEMVEDEDADDVAMDDLKEEAL.

A mitochondrion-targeting transit peptide spans 1 to 44; that stretch reads MINSMPYLHKNLRLLRLLSSKSSPFPLSLRPFSPRSFSLSTLFS. The disordered stretch occupies residues 46 to 67; it reads SSSSSSMENNEATNGSKSSSNS.

This sequence belongs to the RNase Z family. As to quaternary structure, homodimer. Zn(2+) is required as a cofactor. The cofactor is Ca(2+). It depends on Mn(2+) as a cofactor. Mg(2+) serves as cofactor.

The protein localises to the mitochondrion. The protein resides in the nucleus. It carries out the reaction Endonucleolytic cleavage of RNA, removing extra 3' nucleotides from tRNA precursor, generating 3' termini of tRNAs. A 3'-hydroxy group is left at the tRNA terminus and a 5'-phosphoryl group is left at the trailer molecule.. Zinc phosphodiesterase, which displays tRNA 3'-processing endonuclease activity. Involved in tRNA maturation, by removing a 3'-trailer from precursor tRNA. Can process the mitochondrial tRNA-like structures (t-elements). Involved in the processing of small nucleolar RNAs (snoRNAs). The sequence is that of tRNase Z TRZ3, mitochondrial from Arabidopsis thaliana (Mouse-ear cress).